The primary structure comprises 572 residues: uncharacterized protein (572 aa).

The segment at 543-572 is disordered; the sequence is AYKKSSNTNSTTNSMNPRRSTVSSEDWVLN. Positions 547 to 563 are enriched in low complexity; that stretch reads SSNTNSTTNSMNPRRST.

This is an uncharacterized protein from Acanthamoeba polyphaga (Amoeba).